Reading from the N-terminus, the 115-residue chain is Parathyroid hormone (115 aa).

Residues 1 to 25 (MIPAKDMAKVMIVMLAICFLTKSDG) form the signal peptide. The propeptide occupies 26-31 (KSVKKR). Residues 51-69 (RVEWLRKKLQDVHNFIALG) are important for receptor binding. The disordered stretch occupies residues 72–96 (LAPRDAGSQRPRKKEDNILVESHEK). Basic and acidic residues predominate over residues 84–96 (KKEDNILVESHEK).

It belongs to the parathyroid hormone family. Interacts with PTH1R (via N-terminal extracellular domain).

The protein resides in the secreted. In terms of biological role, parathyroid hormone elevates calcium level by dissolving the salts in bone and preventing their renal excretion. Acts by binding to its receptor, PTH1R, activating G protein-coupled receptor signaling. Stimulates [1-14C]-2-deoxy-D-glucose (2DG) transport and glycogen synthesis in osteoblastic cells. The polypeptide is Parathyroid hormone (PTH) (Macaca fascicularis (Crab-eating macaque)).